Here is a 366-residue protein sequence, read N- to C-terminus: MKINNYIIRRKSKKIYIKNVPIGGDSPISVQSMTNTCTTDINSTISQINKLQKAGADIVRVSIPTLEAAESFKIIKRNVSIPIVADIHFDYRIALKAAEYGADCLRINPGNIGKLNRIISVVSTAKEKKLPIRIGVNSGSLEKDIENKYGINNPKSLFESAMRHVNILEKLNFDMFKVSVKSSDVLTCVQSYKLLASKIDQPLHLGITESGSMLHGSIKSSIGIGLLLSEGIGDTLRVSLAADPIEEVKVGFSILRSLNIRKRGINFIACPTCSRQEFDVINVVNVLEKRLEDVITPMNVSVIGCMVNGLGEANRADIGISGSRNKSILFENGLRNNNKINNEEIIDKLEKYIRKKVKILNLKNNC.

4 residues coordinate [4Fe-4S] cluster: Cys-270, Cys-273, Cys-305, and Glu-312.

This sequence belongs to the IspG family. [4Fe-4S] cluster is required as a cofactor.

The enzyme catalyses (2E)-4-hydroxy-3-methylbut-2-enyl diphosphate + oxidized [flavodoxin] + H2O + 2 H(+) = 2-C-methyl-D-erythritol 2,4-cyclic diphosphate + reduced [flavodoxin]. The protein operates within isoprenoid biosynthesis; isopentenyl diphosphate biosynthesis via DXP pathway; isopentenyl diphosphate from 1-deoxy-D-xylulose 5-phosphate: step 5/6. Converts 2C-methyl-D-erythritol 2,4-cyclodiphosphate (ME-2,4cPP) into 1-hydroxy-2-methyl-2-(E)-butenyl 4-diphosphate. The chain is 4-hydroxy-3-methylbut-2-en-1-yl diphosphate synthase (flavodoxin) from Wigglesworthia glossinidia brevipalpis.